The chain runs to 183 residues: MKNVTHSFVFLAHWPFAGSFGLNTDILATNLINLTVVVGVLIFFGKGVLKDLLDNRKQRILSTIRNSEELRRGTLEQLEKARIRLQKVELEADEYRMNGYSEIEREKENLINATSISLEQLEKSKNETLYFEKQRAMNQVRQRVFQQAVQGALGTLNSCLNTELHFRTIRANIGILGAIEWKR.

Residues 25-45 form a helical membrane-spanning segment; that stretch reads DILATNLINLTVVVGVLIFFG.

Belongs to the ATPase B chain family. In terms of assembly, F-type ATPases have 2 components, F(1) - the catalytic core - and F(0) - the membrane proton channel. F(1) has five subunits: alpha(3), beta(3), gamma(1), delta(1), epsilon(1). F(0) has four main subunits: a(1), b(1), b'(1) and c(10-14). The alpha and beta chains form an alternating ring which encloses part of the gamma chain. F(1) is attached to F(0) by a central stalk formed by the gamma and epsilon chains, while a peripheral stalk is formed by the delta, b and b' chains.

The protein resides in the plastid. Its subcellular location is the chloroplast thylakoid membrane. Its function is as follows. F(1)F(0) ATP synthase produces ATP from ADP in the presence of a proton or sodium gradient. F-type ATPases consist of two structural domains, F(1) containing the extramembraneous catalytic core and F(0) containing the membrane proton channel, linked together by a central stalk and a peripheral stalk. During catalysis, ATP synthesis in the catalytic domain of F(1) is coupled via a rotary mechanism of the central stalk subunits to proton translocation. Component of the F(0) channel, it forms part of the peripheral stalk, linking F(1) to F(0). This is ATP synthase subunit b, chloroplastic from Saccharum hybrid (Sugarcane).